Reading from the N-terminus, the 108-residue chain is Integration host factor subunit alpha (108 aa).

This sequence belongs to the bacterial histone-like protein family. As to quaternary structure, heterodimer of an alpha and a beta chain.

Its function is as follows. This protein is one of the two subunits of integration host factor, a specific DNA-binding protein that functions in genetic recombination as well as in transcriptional and translational control. The protein is Integration host factor subunit alpha of Rhodopseudomonas palustris (strain BisB18).